The following is a 786-amino-acid chain: LPS-assembly protein LptD (786 aa).

The first 24 residues, 1-24 (MSFTSRSLLASFTGCLLYGTPAIA), serve as a signal peptide directing secretion.

The protein belongs to the LptD family. As to quaternary structure, component of the lipopolysaccharide transport and assembly complex. Interacts with LptE and LptA.

Its subcellular location is the cell outer membrane. Together with LptE, is involved in the assembly of lipopolysaccharide (LPS) at the surface of the outer membrane. The sequence is that of LPS-assembly protein LptD from Aliivibrio fischeri (strain ATCC 700601 / ES114) (Vibrio fischeri).